The primary structure comprises 513 residues: Na(+)/H(+) antiporter NhaB (513 aa).

The next 12 helical transmembrane spans lie at 23 to 43 (LALIIFLIVNPLIFLISPFVA), 52 to 72 (IFTLAMALKCYPLLPGGLLAI), 97 to 117 (LLLMFMVAGIYFMKQLLLFIF), 120 to 140 (LLLSIRSKMLLSLSFCVAAAF), 144 to 164 (FLDALTVVAVVISVAVGFYGI), 202 to 222 (LMMHAGVGTALGGVMTMVGEP), 238 to 258 (FFLRMSPVTVPVLICGLLTCL), 303 to 323 (AIIGVWLVTALALHLAEVGLI), 348 to 368 (TESLPFTALLTVFFSVVAVII), 391 to 411 (LFYIFNGLLSSISDNVFVGTI), 447 to 467 (ATPNGQAAFLFLLTSALAPLI), and 475 to 495 (VWMALPYTLVLTLVGLLCVEF).

It belongs to the NhaB Na(+)/H(+) (TC 2.A.34) antiporter family.

The protein resides in the cell inner membrane. It catalyses the reaction 2 Na(+)(in) + 3 H(+)(out) = 2 Na(+)(out) + 3 H(+)(in). Na(+)/H(+) antiporter that extrudes sodium in exchange for external protons. This chain is Na(+)/H(+) antiporter NhaB, found in Escherichia coli O6:K15:H31 (strain 536 / UPEC).